We begin with the raw amino-acid sequence, 232 residues long: 5'-methylthioadenosine/S-adenosylhomocysteine nucleosidase (232 aa).

Glu-12 (proton acceptor) is an active-site residue. Substrate-binding positions include Gly-78, Met-153, and 174 to 175 (ME). Catalysis depends on Asp-198, which acts as the Proton donor.

The protein belongs to the PNP/UDP phosphorylase family. MtnN subfamily.

The catalysed reaction is S-adenosyl-L-homocysteine + H2O = S-(5-deoxy-D-ribos-5-yl)-L-homocysteine + adenine. It carries out the reaction S-methyl-5'-thioadenosine + H2O = 5-(methylsulfanyl)-D-ribose + adenine. The enzyme catalyses 5'-deoxyadenosine + H2O = 5-deoxy-D-ribose + adenine. The protein operates within amino-acid biosynthesis; L-methionine biosynthesis via salvage pathway; S-methyl-5-thio-alpha-D-ribose 1-phosphate from S-methyl-5'-thioadenosine (hydrolase route): step 1/2. Its function is as follows. Catalyzes the irreversible cleavage of the glycosidic bond in both 5'-methylthioadenosine (MTA) and S-adenosylhomocysteine (SAH/AdoHcy) to adenine and the corresponding thioribose, 5'-methylthioribose and S-ribosylhomocysteine, respectively. Also cleaves 5'-deoxyadenosine, a toxic by-product of radical S-adenosylmethionine (SAM) enzymes, into 5-deoxyribose and adenine. The sequence is that of 5'-methylthioadenosine/S-adenosylhomocysteine nucleosidase from Anoxybacillus flavithermus (strain DSM 21510 / WK1).